Here is a 314-residue protein sequence, read N- to C-terminus: Protoheme IX farnesyltransferase (314 aa).

Transmembrane regions (helical) follow at residues 36–56 (IGIVNSNLITTIAGFLLAISF), 65–85 (WGTFLLTIIGTALVIAGGCIV), 114–134 (SVLTFGLLTTAVGLLLLMFTS), 135–155 (WYATLFAFIGWFGYVVLYTIW), 179–199 (WAAISPSFHIVPFVMFLIMFI), 237–257 (IIVYIACLLPLPFFLLPTMGI), 259–279 (FAVIATLLNLGWLAIAFTGLF), and 290–310 (IFIFSLNYLIILFPLMIIVKL).

The protein belongs to the UbiA prenyltransferase family. Protoheme IX farnesyltransferase subfamily. In terms of assembly, interacts with CtaA.

Its subcellular location is the cell membrane. The enzyme catalyses heme b + (2E,6E)-farnesyl diphosphate + H2O = Fe(II)-heme o + diphosphate. Its pathway is porphyrin-containing compound metabolism; heme O biosynthesis; heme O from protoheme: step 1/1. Functionally, converts heme B (protoheme IX) to heme O by substitution of the vinyl group on carbon 2 of heme B porphyrin ring with a hydroxyethyl farnesyl side group. The polypeptide is Protoheme IX farnesyltransferase (Oceanobacillus iheyensis (strain DSM 14371 / CIP 107618 / JCM 11309 / KCTC 3954 / HTE831)).